A 402-amino-acid chain; its full sequence is 1-deoxy-D-xylulose 5-phosphate reductoisomerase (402 aa).

Residues Thr-10, Gly-11, Ser-12, Ile-13, Asn-38, and Asn-124 each contribute to the NADPH site. Lys-125 serves as a coordination point for 1-deoxy-D-xylulose 5-phosphate. Glu-126 contributes to the NADPH binding site. Position 150 (Asp-150) interacts with Mn(2+). Residues Ser-151, Glu-152, Ser-186, and His-209 each contribute to the 1-deoxy-D-xylulose 5-phosphate site. Glu-152 provides a ligand contact to Mn(2+). Position 215 (Gly-215) interacts with NADPH. The 1-deoxy-D-xylulose 5-phosphate site is built by Ser-222, Asn-227, Lys-228, and Glu-231. Mn(2+) is bound at residue Glu-231.

This sequence belongs to the DXR family. It depends on Mg(2+) as a cofactor. Requires Mn(2+) as cofactor.

It carries out the reaction 2-C-methyl-D-erythritol 4-phosphate + NADP(+) = 1-deoxy-D-xylulose 5-phosphate + NADPH + H(+). Its pathway is isoprenoid biosynthesis; isopentenyl diphosphate biosynthesis via DXP pathway; isopentenyl diphosphate from 1-deoxy-D-xylulose 5-phosphate: step 1/6. Its function is as follows. Catalyzes the NADPH-dependent rearrangement and reduction of 1-deoxy-D-xylulose-5-phosphate (DXP) to 2-C-methyl-D-erythritol 4-phosphate (MEP). The polypeptide is 1-deoxy-D-xylulose 5-phosphate reductoisomerase (Vibrio vulnificus (strain CMCP6)).